Consider the following 428-residue polypeptide: Serine--tRNA ligase (428 aa).

Position 231-233 (231-233) interacts with L-serine; it reads TAE. 262 to 264 lines the ATP pocket; the sequence is RSE. Residue E285 participates in L-serine binding. 349-352 contributes to the ATP binding site; sequence EISS. S385 contacts L-serine.

Belongs to the class-II aminoacyl-tRNA synthetase family. Type-1 seryl-tRNA synthetase subfamily. Homodimer. The tRNA molecule binds across the dimer.

The protein localises to the cytoplasm. It catalyses the reaction tRNA(Ser) + L-serine + ATP = L-seryl-tRNA(Ser) + AMP + diphosphate + H(+). It carries out the reaction tRNA(Sec) + L-serine + ATP = L-seryl-tRNA(Sec) + AMP + diphosphate + H(+). Its pathway is aminoacyl-tRNA biosynthesis; selenocysteinyl-tRNA(Sec) biosynthesis; L-seryl-tRNA(Sec) from L-serine and tRNA(Sec): step 1/1. In terms of biological role, catalyzes the attachment of serine to tRNA(Ser). Is also able to aminoacylate tRNA(Sec) with serine, to form the misacylated tRNA L-seryl-tRNA(Sec), which will be further converted into selenocysteinyl-tRNA(Sec). This Staphylococcus haemolyticus (strain JCSC1435) protein is Serine--tRNA ligase.